The sequence spans 390 residues: Phosphoprotein (390 aa).

Residues Thr-10 and Thr-16 each carry the phosphothreonine modification. Positions 54–65 are enriched in polar residues; the sequence is QKNIQHPTASHQ. 2 disordered regions span residues 54-98 and 144-183; these read QKNI…EPLF and RTSTPVTEFKRGAGSRAQGQTIQEEGIDGNGASAGSKERS. Position 69 is a phosphoserine (Ser-69). Residues Thr-91, Thr-150, and Thr-164 each carry the phosphothreonine modification. Ser-187 bears the Phosphoserine mark. Thr-249 carries the phosphothreonine modification. Ser-256 carries the phosphoserine modification. Residues Thr-257 and Thr-281 each carry the phosphothreonine modification. A phosphoserine mark is found at Ser-291 and Ser-293. Residue Thr-297 is modified to Phosphothreonine. Residues Ser-300 and Ser-373 each carry the phosphoserine modification. The segment at 342–390 is interaction with the nucleoprotein; it reads AGRKVMITKMITDCVANPQMKQAFEQRLAKASTEDALNDIKKDIIRSAI. Thr-374 carries the phosphothreonine modification.

It belongs to the rubulavirus/avulavirus P protein family. As to quaternary structure, homotetramer. Interacts (via multimerization domain) with polymerase L; this interaction forms the polymerase L-P complex. Interacts (via N-terminus) with N0 (via Ncore); this interaction allows P to chaperon N0 to avoid N polymerization before encapsidation. Interacts (via C-terminus) with N-RNA template; this interaction positions the polymerase on the template for both transcription and replication. Interacts with host RPS6KB1 kinase; this interaction may play a role in the viral replication and transcription.

Its function is as follows. Essential cofactor of the RNA polymerase L that plays a central role in the transcription and replication by forming the polymerase complex with RNA polymerase L and recruiting L to the genomic N-RNA template for RNA synthesis. Also plays a central role in the encapsidation of nascent RNA chains by forming the encapsidation complex with the nucleocapsid protein N (N-P complex). Acts as a chaperone for newly synthesized free N protein, so-called N0, allowing encapsidation of nascent RNA chains during replication. The nucleoprotein protein N prevents excessive phosphorylation of P, which leads to down-regulation of viral transcription/ replication. Participates, together with N, in the formation of viral factories (viroplasms), which are large inclusions in the host cytoplasm where replication takes place. The polypeptide is Phosphoprotein (P/V) (Homo sapiens (Human)).